We begin with the raw amino-acid sequence, 240 residues long: Cysteine-rich venom protein catrin (240 aa).

A signal peptide spans 1–19; the sequence is MIAFIVLPILAAVLQQSSG. The region spanning 38-166 is the SCP domain; it reads VDLHNFLRRS…KYSYFYVCQY (129 aa). Cystine bridges form between cysteine 75-cysteine 153, cysteine 92-cysteine 167, cysteine 148-cysteine 164, cysteine 186-cysteine 193, cysteine 189-cysteine 198, cysteine 202-cysteine 235, cysteine 211-cysteine 229, and cysteine 220-cysteine 233. The ShKT domain maps to 202 to 235; sequence CTKEDKYTNCKSLVQQAGCQDKQMQSDCPAICFC.

This sequence belongs to the CRISP family. Expressed by the venom gland.

Its subcellular location is the secreted. In terms of biological role, catrin-2 weakly blocks contraction of smooth muscle elicited by high potassium-induced depolarization, but does not block caffeine-stimulated contraction. Catrin-1 has no significant effect. May target voltage-gated calcium channels on smooth muscle. The sequence is that of Cysteine-rich venom protein catrin from Crotalus atrox (Western diamondback rattlesnake).